The sequence spans 166 residues: Protein UTR5 (166 aa).

The sequence is that of Protein UTR5 (UTR5) from Saccharomyces cerevisiae (strain ATCC 204508 / S288c) (Baker's yeast).